The chain runs to 149 residues: Calmodulin-2 (149 aa).

A2 is modified (N-acetylalanine). EF-hand domains are found at residues 8–43 (EQIAEFKEAFSLFDKDGNGNITTKELGTVMRSLGQN), 44–79 (PTEGELQDMINEVDADGNGTIDFPEFLTMMARKMKD), 81–116 (DSEEEIREAFKVFDKDGNGFISAAELRHVMTNPGEK), and 117–149 (LTDEEVDEMIREADIDGDGQVNYEEFVKMMTSK). 14 residues coordinate Ca(2+): D21, D23, N25, N27, E32, D57, D59, N61, T63, E68, D94, D96, N98, and E105. Residue K116 is modified to N6,N6,N6-trimethyllysine. Ca(2+)-binding residues include D130, D132, D134, Q136, and E141.

Belongs to the calmodulin family.

Functionally, calmodulin mediates the control of a large number of enzymes, ion channels and other proteins by Ca(2+). Among the enzymes to be stimulated by the calmodulin-Ca(2+) complex are a number of protein kinases and phosphatases. This is Calmodulin-2 (CAM2) from Branchiostoma floridae (Florida lancelet).